A 678-amino-acid polypeptide reads, in one-letter code: Glycine--tRNA ligase beta subunit (678 aa).

It belongs to the class-II aminoacyl-tRNA synthetase family. In terms of assembly, tetramer of two alpha and two beta subunits.

It localises to the cytoplasm. It catalyses the reaction tRNA(Gly) + glycine + ATP = glycyl-tRNA(Gly) + AMP + diphosphate. This Streptococcus pneumoniae serotype 19F (strain G54) protein is Glycine--tRNA ligase beta subunit.